A 316-amino-acid chain; its full sequence is MTEQMTLRGTLQGHGGWVTQIATTPQYPDMILSASRDKSLIVWRLTRDESSYGVPQKSLHGHGHFVSDVILSSDGQFALSGSWDHTLRLWDLSTGQTTRRFVGHTKDVLSVAFSADNRQIVSGSRDKTIKLWNTLGVCKYTIQDDCHTDWTSCVRFSPNTQNPIIVSSGWDRLVKVWNLTNCKLKTNHYGHTGYVNTVTVSPDGSLCASGGKDSQAMLWDLNEGKHLYTLDGAGDTINALCFSPNRYWLCVASGPSIKIWDLEGKVVVDELKPEVMGTTSKAPTCLSLAWSADGQTLFAGYTDKLIRVWQVSMVSR.

7 WD repeats span residues 4-46, 52-93, 94-135, 137-180, 181-221, 222-263, and 264-312; these read QMTL…WRLT, YGVP…WDLS, TGQT…WNTL, VCKY…WNLT, NCKL…LWDL, NEGK…WDLE, and GKVV…WQVS.

It belongs to the WD repeat G protein beta family. Ribosomal protein RACK1 subfamily.

This Biomphalaria glabrata (Bloodfluke planorb) protein is Small ribosomal subunit protein RACK1.